Consider the following 304-residue polypeptide: Voltage-dependent anion channel-forming protein YneE (304 aa).

Transmembrane regions (helical) follow at residues 28–48, 50–70, 209–229, and 235–255; these read LLLN…YTML, IKFT…FLGF, AYTL…PFAL, and YMTP…DALA.

This sequence belongs to the anion channel-forming bestrophin (TC 1.A.46) family.

The protein localises to the cell membrane. This is Voltage-dependent anion channel-forming protein YneE (yneE) from Salmonella typhi.